The primary structure comprises 647 residues: Exoribonuclease 2 (647 aa).

The RNB domain occupies 190–519 (REDLTSLPFV…NHRLLKAIIK (330 aa)). Residues 564-646 (EQRFSAEVID…ETRSIVARPV (83 aa)) enclose the S1 motif domain.

The protein belongs to the RNR ribonuclease family. RNase II subfamily.

The protein localises to the cytoplasm. The enzyme catalyses Exonucleolytic cleavage in the 3'- to 5'-direction to yield nucleoside 5'-phosphates.. In terms of biological role, involved in mRNA degradation. Hydrolyzes single-stranded polyribonucleotides processively in the 3' to 5' direction. The protein is Exoribonuclease 2 of Erwinia tasmaniensis (strain DSM 17950 / CFBP 7177 / CIP 109463 / NCPPB 4357 / Et1/99).